Reading from the N-terminus, the 221-residue chain is Large ribosomal subunit protein uL4 (221 aa).

Residues 46–74 (AGTASTKTRSEVSGGGRKPWPQKHTGRAR) are disordered.

This sequence belongs to the universal ribosomal protein uL4 family. In terms of assembly, part of the 50S ribosomal subunit.

One of the primary rRNA binding proteins, this protein initially binds near the 5'-end of the 23S rRNA. It is important during the early stages of 50S assembly. It makes multiple contacts with different domains of the 23S rRNA in the assembled 50S subunit and ribosome. Functionally, forms part of the polypeptide exit tunnel. The polypeptide is Large ribosomal subunit protein uL4 (Petrotoga mobilis (strain DSM 10674 / SJ95)).